The following is a 145-amino-acid chain: D-aminoacyl-tRNA deacylase (145 aa).

Residues 137–138 carry the Gly-cisPro motif, important for rejection of L-amino acids motif; that stretch reads GP.

This sequence belongs to the DTD family. As to quaternary structure, homodimer.

Its subcellular location is the cytoplasm. It carries out the reaction glycyl-tRNA(Ala) + H2O = tRNA(Ala) + glycine + H(+). The enzyme catalyses a D-aminoacyl-tRNA + H2O = a tRNA + a D-alpha-amino acid + H(+). Functionally, an aminoacyl-tRNA editing enzyme that deacylates mischarged D-aminoacyl-tRNAs. Also deacylates mischarged glycyl-tRNA(Ala), protecting cells against glycine mischarging by AlaRS. Acts via tRNA-based rather than protein-based catalysis; rejects L-amino acids rather than detecting D-amino acids in the active site. By recycling D-aminoacyl-tRNA to D-amino acids and free tRNA molecules, this enzyme counteracts the toxicity associated with the formation of D-aminoacyl-tRNA entities in vivo and helps enforce protein L-homochirality. The polypeptide is D-aminoacyl-tRNA deacylase (Escherichia coli O139:H28 (strain E24377A / ETEC)).